The primary structure comprises 163 residues: Neurotrophin-3 (163 aa).

The N-terminal stretch at 1-3 is a signal peptide; the sequence is IQS. Residues 4 to 119 constitute a propeptide that is removed on maturation; sequence TSMDQGILTE…VLNRTSRRKR (116 aa). N-linked (GlcNAc...) asparagine glycosylation is present at asparagine 112. The tract at residues 112–132 is disordered; the sequence is NRTSRRKREGKSHRGEYSVCD. Positions 123–132 are enriched in basic and acidic residues; it reads SHRGEYSVCD.

This sequence belongs to the NGF-beta family.

The protein localises to the secreted. Seems to promote the survival of visceral and proprioceptive sensory neurons. This is Neurotrophin-3 (NTF3) from Exiliboa placata (Oaxacan dwarf boa).